Here is a 321-residue protein sequence, read N- to C-terminus: Glucokinase (321 aa).

8–13 (GDVGGT) lines the ATP pocket.

It belongs to the bacterial glucokinase family.

It is found in the cytoplasm. It catalyses the reaction D-glucose + ATP = D-glucose 6-phosphate + ADP + H(+). The sequence is that of Glucokinase from Salmonella schwarzengrund (strain CVM19633).